Reading from the N-terminus, the 184-residue chain is Elongation factor P (184 aa).

This sequence belongs to the elongation factor P family.

It localises to the cytoplasm. It functions in the pathway protein biosynthesis; polypeptide chain elongation. Functionally, involved in peptide bond synthesis. Stimulates efficient translation and peptide-bond synthesis on native or reconstituted 70S ribosomes in vitro. Probably functions indirectly by altering the affinity of the ribosome for aminoacyl-tRNA, thus increasing their reactivity as acceptors for peptidyl transferase. This is Elongation factor P from Albidiferax ferrireducens (strain ATCC BAA-621 / DSM 15236 / T118) (Rhodoferax ferrireducens).